A 693-amino-acid chain; its full sequence is MKNNLKYTRNIGIAAHIDAGKTTTTERILFYTGINHKIGEVHDGTATMDWMEQEQERGITITSAATKCEWLYNNNIYKINIIDTPGHVDFTVEVERSLRVLDGMVALFSAVDGVEPQSETVWRQADKYKVPRIGFVNKMDRQGADFFNVCEQIKSNLGANCLILQIPIGIEDNFQGVVDIISKKAIIWDEKNYGTSYNIRTIPEELLELTNKYRNILIETISEYDYDIMGKYFSNPNEISENDIISSIKKSTINLDIVPIICGSSFKNKGVQVMLDAICRYLPSPIDIKETKGINPKTEKEEIRKHNSKEPFSALAFKIATDSFVGRLAFFRVYSGQLKSGTYILNSRSGNKERISRIYQMHANKQNPVNIIEAGDIGAAVGFKDIKTGDTLCDENYPIIYENISFPDPVIGLAIEPKYKSDIDKMSLALSKLSEEDPTFIVRNDKYTGQTIISGMGELHLEIILDRMEREFKVKVNKGNPQVEYKEALTNSIEHREIYKKQTGGRGKYADILFKLEPGKKGAQGLEFINKVKGGNIPKEYIPSIEKAFKEAMKNGPLYGYEINNARIILIDGSYHSVDSDQLSFELASKIGFKNAAKKTNPIILEPIMKLEVLTPPENMGNIVGDINRRRGIIQGMEENRSNSKIIKALVPLSELFGYVTILRTLSSGRATSTMEFYKYKPKPAPYNILNKK.

One can recognise a tr-type G domain in the interval 6 to 286 (KYTRNIGIAA…AICRYLPSPI (281 aa)). GTP-binding positions include 15-22 (AHIDAGKT), 83-87 (DTPGH), and 137-140 (NKMD).

It belongs to the TRAFAC class translation factor GTPase superfamily. Classic translation factor GTPase family. EF-G/EF-2 subfamily.

The protein resides in the cytoplasm. Functionally, catalyzes the GTP-dependent ribosomal translocation step during translation elongation. During this step, the ribosome changes from the pre-translocational (PRE) to the post-translocational (POST) state as the newly formed A-site-bound peptidyl-tRNA and P-site-bound deacylated tRNA move to the P and E sites, respectively. Catalyzes the coordinated movement of the two tRNA molecules, the mRNA and conformational changes in the ribosome. In Karelsulcia muelleri (strain GWSS) (Sulcia muelleri), this protein is Elongation factor G.